The following is a 215-amino-acid chain: Deoxyribose-phosphate aldolase (215 aa).

D90 acts as the Proton donor/acceptor in catalysis. K152 acts as the Schiff-base intermediate with acetaldehyde in catalysis. Residue K181 is the Proton donor/acceptor of the active site.

This sequence belongs to the DeoC/FbaB aldolase family. DeoC type 1 subfamily.

The protein resides in the cytoplasm. The catalysed reaction is 2-deoxy-D-ribose 5-phosphate = D-glyceraldehyde 3-phosphate + acetaldehyde. It functions in the pathway carbohydrate degradation; 2-deoxy-D-ribose 1-phosphate degradation; D-glyceraldehyde 3-phosphate and acetaldehyde from 2-deoxy-alpha-D-ribose 1-phosphate: step 2/2. Catalyzes a reversible aldol reaction between acetaldehyde and D-glyceraldehyde 3-phosphate to generate 2-deoxy-D-ribose 5-phosphate. The chain is Deoxyribose-phosphate aldolase from Ureaplasma parvum serovar 3 (strain ATCC 27815 / 27 / NCTC 11736).